Here is a 276-residue protein sequence, read N- to C-terminus: NADPH-dependent 7-cyano-7-deazaguanine reductase (276 aa).

83-85 contributes to the substrate binding site; the sequence is IES. 85–86 lines the NADPH pocket; sequence SK. The active-site Thioimide intermediate is Cys-184. The Proton donor role is filled by Asp-191. Residue 223–224 participates in substrate binding; sequence HE. Residue 252-253 coordinates NADPH; sequence RG.

It belongs to the GTP cyclohydrolase I family. QueF type 2 subfamily. Homodimer.

The protein resides in the cytoplasm. It catalyses the reaction 7-aminomethyl-7-carbaguanine + 2 NADP(+) = 7-cyano-7-deazaguanine + 2 NADPH + 3 H(+). Its pathway is tRNA modification; tRNA-queuosine biosynthesis. Its function is as follows. Catalyzes the NADPH-dependent reduction of 7-cyano-7-deazaguanine (preQ0) to 7-aminomethyl-7-deazaguanine (preQ1). The chain is NADPH-dependent 7-cyano-7-deazaguanine reductase from Pseudomonas aeruginosa (strain LESB58).